The sequence spans 178 residues: Ribulose bisphosphate carboxylase small subunit, chloroplastic (178 aa).

Residues 1-55 constitute a chloroplast transit peptide; it reads MASSMMVSTAAVSRTSPAQSNMVVPFAGLHSSAAFPVTRKFADSSKLPSNGLRVR.

Belongs to the RuBisCO small chain family. Heterohexadecamer of 8 large and 8 small subunits.

It localises to the plastid. The protein resides in the chloroplast. Its function is as follows. RuBisCO catalyzes two reactions: the carboxylation of D-ribulose 1,5-bisphosphate, the primary event in carbon dioxide fixation, as well as the oxidative fragmentation of the pentose substrate. Both reactions occur simultaneously and in competition at the same active site. Although the small subunit is not catalytic it is essential for maximal activity. The sequence is that of Ribulose bisphosphate carboxylase small subunit, chloroplastic from Zantedeschia aethiopica (White calla lily).